The sequence spans 180 residues: Hypoxanthine-guanine phosphoribosyltransferase (180 aa).

Residues lysine 43 and glycine 44 each coordinate diphosphate. Glutamate 99 and aspartate 100 together coordinate Mg(2+). The active-site Proton acceptor is the aspartate 103. Residues lysine 131, phenylalanine 152–valine 153, and aspartate 159 each bind GMP. Arginine 165 contributes to the diphosphate binding site.

This sequence belongs to the purine/pyrimidine phosphoribosyltransferase family. Requires Mg(2+) as cofactor.

It is found in the cytoplasm. The catalysed reaction is IMP + diphosphate = hypoxanthine + 5-phospho-alpha-D-ribose 1-diphosphate. It catalyses the reaction GMP + diphosphate = guanine + 5-phospho-alpha-D-ribose 1-diphosphate. Its pathway is purine metabolism; IMP biosynthesis via salvage pathway; IMP from hypoxanthine: step 1/1. It functions in the pathway purine metabolism; GMP biosynthesis via salvage pathway; GMP from guanine: step 1/1. Purine salvage pathway enzyme that catalyzes the transfer of the ribosyl-5-phosphate group from 5-phospho-alpha-D-ribose 1-diphosphate (PRPP) to the N9 position of the 6-oxopurines hypoxanthine and guanine to form the corresponding ribonucleotides IMP (inosine 5'-monophosphate) and GMP (guanosine 5'-monophosphate), with the release of PPi. This is Hypoxanthine-guanine phosphoribosyltransferase (hpt) from Streptococcus pneumoniae serotype 4 (strain ATCC BAA-334 / TIGR4).